The chain runs to 165 residues: Cell division protein SepF (165 aa).

The interval 23-75 (DEYGDYAGDYETQETAPVATRSSKRESRPAPVSDLSERRRPASGPTGVVAELS) is disordered.

This sequence belongs to the SepF family. Homodimer. Interacts with FtsZ.

Its subcellular location is the cytoplasm. In terms of biological role, cell division protein that is part of the divisome complex and is recruited early to the Z-ring. Probably stimulates Z-ring formation, perhaps through the cross-linking of FtsZ protofilaments. Its function overlaps with FtsA. The chain is Cell division protein SepF from Nocardioides sp. (strain ATCC BAA-499 / JS614).